A 159-amino-acid chain; its full sequence is Membrane protein FAM174B (159 aa).

The signal sequence occupies residues 1-27 (MRAALPPARLLPLLLLLALLGAPAARA). A disordered region spans residues 28 to 73 (SRAQSAAPPQPGAERQPRPPPGPGPGNATGTGSGEAAGGGGSSNSS). Residues 28–90 (SRAQSAAPPQ…ISSLLRDLHT (63 aa)) lie on the Extracellular side of the membrane. Residues 52-69 (PGNATGTGSGEAAGGGGS) show a composition bias toward gly residues. N-linked (GlcNAc...) asparagine glycosylation is present at Asn54. The helical transmembrane segment at 91-111 (LKAAVIVACAFTAFLIACLLL) threads the bilayer. Residues 112–159 (RVFRSGKRLKKTRKYDIITTPAERVEMAPLNEEDDEDEDSTVFDIKYR) are Cytoplasmic-facing.

The protein belongs to the FAM174 family.

The protein resides in the cell membrane. It is found in the golgi apparatus. Its function is as follows. Essential for Golgi structural integrity. The sequence is that of Membrane protein FAM174B (FAM174B) from Bos taurus (Bovine).